The following is a 160-amino-acid chain: Ribosomal RNA large subunit methyltransferase H (160 aa).

S-adenosyl-L-methionine-binding residues include Leu-76 and Gly-108.

Belongs to the RNA methyltransferase RlmH family. As to quaternary structure, homodimer.

Its subcellular location is the cytoplasm. It carries out the reaction pseudouridine(1915) in 23S rRNA + S-adenosyl-L-methionine = N(3)-methylpseudouridine(1915) in 23S rRNA + S-adenosyl-L-homocysteine + H(+). Its function is as follows. Specifically methylates the pseudouridine at position 1915 (m3Psi1915) in 23S rRNA. The polypeptide is Ribosomal RNA large subunit methyltransferase H (Afipia carboxidovorans (strain ATCC 49405 / DSM 1227 / KCTC 32145 / OM5) (Oligotropha carboxidovorans)).